The following is a 494-amino-acid chain: Aspartyl/glutamyl-tRNA(Asn/Gln) amidotransferase subunit B (494 aa).

This sequence belongs to the GatB/GatE family. GatB subfamily. In terms of assembly, heterotrimer of A, B and C subunits.

The catalysed reaction is L-glutamyl-tRNA(Gln) + L-glutamine + ATP + H2O = L-glutaminyl-tRNA(Gln) + L-glutamate + ADP + phosphate + H(+). It carries out the reaction L-aspartyl-tRNA(Asn) + L-glutamine + ATP + H2O = L-asparaginyl-tRNA(Asn) + L-glutamate + ADP + phosphate + 2 H(+). Its function is as follows. Allows the formation of correctly charged Asn-tRNA(Asn) or Gln-tRNA(Gln) through the transamidation of misacylated Asp-tRNA(Asn) or Glu-tRNA(Gln) in organisms which lack either or both of asparaginyl-tRNA or glutaminyl-tRNA synthetases. The reaction takes place in the presence of glutamine and ATP through an activated phospho-Asp-tRNA(Asn) or phospho-Glu-tRNA(Gln). The sequence is that of Aspartyl/glutamyl-tRNA(Asn/Gln) amidotransferase subunit B from Nitrobacter hamburgensis (strain DSM 10229 / NCIMB 13809 / X14).